The primary structure comprises 37 residues: Cytochrome b6-f complex subunit 5 (37 aa).

Residues 5–25 (LLSGIVLGMITVSAFGLFVAA) traverse the membrane as a helical segment.

This sequence belongs to the PetG family. As to quaternary structure, the 4 large subunits of the cytochrome b6-f complex are cytochrome b6, subunit IV (17 kDa polypeptide, PetD), cytochrome f and the Rieske protein, while the 4 small subunits are PetG, PetL, PetM and PetN. The complex functions as a dimer.

Its subcellular location is the plastid. The protein resides in the chloroplast thylakoid membrane. Functionally, component of the cytochrome b6-f complex, which mediates electron transfer between photosystem II (PSII) and photosystem I (PSI), cyclic electron flow around PSI, and state transitions. PetG is required for either the stability or assembly of the cytochrome b6-f complex. This Thalassiosira pseudonana (Marine diatom) protein is Cytochrome b6-f complex subunit 5.